The sequence spans 109 residues: Nucleoid-associated protein CKO_02678 (109 aa).

The disordered stretch occupies residues 89–109; the sequence is KEKMASVSSGMQLPPGFKMPF.

This sequence belongs to the YbaB/EbfC family. As to quaternary structure, homodimer.

It localises to the cytoplasm. It is found in the nucleoid. Binds to DNA and alters its conformation. May be involved in regulation of gene expression, nucleoid organization and DNA protection. This Citrobacter koseri (strain ATCC BAA-895 / CDC 4225-83 / SGSC4696) protein is Nucleoid-associated protein CKO_02678.